A 403-amino-acid chain; its full sequence is Na(+)-translocating NADH-quinone reductase subunit B (403 aa).

9 consecutive transmembrane segments (helical) span residues 56–76, 121–141, 163–183, 220–240, 258–278, 287–307, 312–332, 348–368, and 371–391; these read MMIT…WNTG, AYFL…EVLF, ILPP…GVVI, WTAV…AGGI, IHGS…AVLI, IVTG…LIGS, LFGM…GMIF, WVFG…NPAF, and GMML…HFVI. An FMN phosphoryl threonine modification is found at Thr230.

This sequence belongs to the NqrB/RnfD family. As to quaternary structure, composed of six subunits; NqrA, NqrB, NqrC, NqrD, NqrE and NqrF. FMN serves as cofactor.

It localises to the cell inner membrane. The catalysed reaction is a ubiquinone + n Na(+)(in) + NADH + H(+) = a ubiquinol + n Na(+)(out) + NAD(+). Functionally, NQR complex catalyzes the reduction of ubiquinone-1 to ubiquinol by two successive reactions, coupled with the transport of Na(+) ions from the cytoplasm to the periplasm. NqrA to NqrE are probably involved in the second step, the conversion of ubisemiquinone to ubiquinol. The polypeptide is Na(+)-translocating NADH-quinone reductase subunit B (Stutzerimonas stutzeri (strain A1501) (Pseudomonas stutzeri)).